A 238-amino-acid chain; its full sequence is N-(5'-phosphoribosyl)anthranilate isomerase (238 aa).

Belongs to the TrpF family.

It carries out the reaction N-(5-phospho-beta-D-ribosyl)anthranilate = 1-(2-carboxyphenylamino)-1-deoxy-D-ribulose 5-phosphate. It functions in the pathway amino-acid biosynthesis; L-tryptophan biosynthesis; L-tryptophan from chorismate: step 3/5. The chain is N-(5'-phosphoribosyl)anthranilate isomerase from Methanosarcina acetivorans (strain ATCC 35395 / DSM 2834 / JCM 12185 / C2A).